The chain runs to 146 residues: Hemoglobin subunit beta (146 aa).

Residues 2 to 146 enclose the Globin domain; sequence HWSAEEKQLI…VAHALARKYH (145 aa). 2 residues coordinate heme b: His63 and His92.

This sequence belongs to the globin family. In terms of assembly, heterotetramer of two alpha chains and two beta chains. Red blood cells.

In terms of biological role, involved in oxygen transport from the lung to the various peripheral tissues. This chain is Hemoglobin subunit beta (HBB), found in Eudyptes chrysocome (Western rockhopper penguin).